The following is a 306-amino-acid chain: Probable cobalamin biosynthesis protein CobD (306 aa).

Transmembrane regions (helical) follow at residues 17 to 37 (IGEP…IIFF), 54 to 74 (LFGF…AYEI), 88 to 108 (ISLY…IEFS), 155 to 175 (ITDS…PGAF), 207 to 227 (ILNF…APFY), and 286 to 306 (SLKA…VLLM).

Belongs to the CobD/CbiB family.

Its subcellular location is the cell membrane. It functions in the pathway cofactor biosynthesis; adenosylcobalamin biosynthesis. In terms of biological role, converts cobyric acid to cobinamide by the addition of aminopropanol on the F carboxylic group. This chain is Probable cobalamin biosynthesis protein CobD, found in Methanococcus maripaludis (strain C5 / ATCC BAA-1333).